A 522-amino-acid chain; its full sequence is F-box only protein 7 (522 aa).

Disordered stretches follow at residues methionine 1–glutamate 20 and proline 85–valine 128. The interval methionine 1–proline 88 is ubiquitin-like. Over residues leucine 87 to asparagine 114 the composition is skewed to polar residues. Positions aspartate 92 to threonine 129 are important for interaction with PINK1. Positions threonine 129–methionine 169 are important for interaction with CDK6. Residues proline 180–leucine 324 form an important for dimerization and interaction with PSMF1 region. Positions valine 329–leucine 375 constitute an F-box domain. Positions arginine 381–leucine 522 are important for interaction with CDK6. 2 positions are modified to omega-N-methylarginine: arginine 431 and arginine 451. The interval aspartate 459–leucine 522 is disordered. An RFDP motif motif is present at residues arginine 481–proline 484. Arginine 518 is subject to Asymmetric dimethylarginine.

In terms of assembly, part of the SCF (SKP1-CUL1-F-box) E3 ubiquitin-protein ligase complex SCF(FBXO7) formed of CUL1, SKP1, RBX1 and FBXO7. Interacts via its C-terminal proline-rich region with DLGAP5. Interacts with BIRC2. Interacts with CDK6 and promotes its interaction with D-type cyclin. Interacts (via the N-terminal Ubl domain) with PRKN. Interacts (via N-terminal region) with PINK1. Interacts with PSMF1.

The protein localises to the cytoplasm. It is found in the nucleus. Its subcellular location is the mitochondrion. The protein resides in the cytosol. Its pathway is protein modification; protein ubiquitination. Functionally, substrate recognition component of a SCF (SKP1-CUL1-F-box protein) E3 ubiquitin-protein ligase complex which mediates the ubiquitination and subsequent proteasomal degradation of target proteins and plays a role in several biological processes such as cell cycle, cell proliferation, or maintenance of chromosome stability. Recognizes and ubiquitinates BIRC2 and the cell cycle regulator DLGAP5. Plays a role downstream of PINK1 in the clearance of damaged mitochondria via selective autophagy (mitophagy) by targeting PRKN to dysfunctional depolarized mitochondria. Promotes MFN1 ubiquitination. Mediates the ubiquitination and proteasomal degradation of UXT isoform 2, thereby impairing the NF-kappa-B signaling pathway. Inhibits NF-kappa-B pathway also by promoting the ubiquitinatioin of TRAF2. Affects the assembly state and activity of the proteasome in the cells including neurons by ubiquitinating the proteasomal subunit PSMA2 via 'Lys-63'-linked polyubiquitin chains. Promotes 'Lys-48'-linked polyubiquitination SIRT7, leading to the hydrogen peroxide-induced cell death. The chain is F-box only protein 7 (Fbxo7) from Rattus norvegicus (Rat).